We begin with the raw amino-acid sequence, 71 residues long: DNA-directed RNA polymerases II, IV and V subunit 10 (71 aa).

Residues cysteine 7, cysteine 10, cysteine 44, and cysteine 45 each coordinate Zn(2+).

Belongs to the archaeal Rpo10/eukaryotic RPB10 RNA polymerase subunit family. Component of the RNA polymerase II, IV and V complexes. Interacts with NRPD1.

It is found in the nucleus. In terms of biological role, DNA-dependent RNA polymerase catalyzes the transcription of DNA into RNA using the four ribonucleoside triphosphates as substrates. Component of RNA polymerase II which synthesizes mRNA precursors and many functional non-coding RNAs. Pol II is the central component of the basal RNA polymerase II transcription machinery. It is composed of mobile elements that move relative to each other. Component of RNA polymerases IV and V which mediate short-interfering RNAs (siRNA) accumulation and subsequent RNA-directed DNA methylation-dependent (RdDM) transcriptional gene silencing (TGS) of endogenous repeated sequences, including transposable elements. The sequence is that of DNA-directed RNA polymerases II, IV and V subunit 10 (NRPB10) from Arabidopsis thaliana (Mouse-ear cress).